A 336-amino-acid polypeptide reads, in one-letter code: Holliday junction branch migration complex subunit RuvB (336 aa).

The segment at 4–184 (ADRLISAGTT…FGIVQRLEFY (181 aa)) is large ATPase domain (RuvB-L). ATP is bound by residues isoleucine 23, arginine 24, glycine 65, lysine 68, threonine 69, threonine 70, 131-133 (EDY), arginine 174, tyrosine 184, and arginine 221. Threonine 69 provides a ligand contact to Mg(2+). The segment at 185-255 (QVPDLQYIVS…IAAQALDMLN (71 aa)) is small ATPAse domain (RuvB-S). Residues 258–336 (AEGFDYMDRK…HFGITPPEMP (79 aa)) form a head domain (RuvB-H) region. Residues arginine 294, arginine 313, and arginine 318 each contribute to the DNA site.

This sequence belongs to the RuvB family. As to quaternary structure, homohexamer. Forms an RuvA(8)-RuvB(12)-Holliday junction (HJ) complex. HJ DNA is sandwiched between 2 RuvA tetramers; dsDNA enters through RuvA and exits via RuvB. An RuvB hexamer assembles on each DNA strand where it exits the tetramer. Each RuvB hexamer is contacted by two RuvA subunits (via domain III) on 2 adjacent RuvB subunits; this complex drives branch migration. In the full resolvosome a probable DNA-RuvA(4)-RuvB(12)-RuvC(2) complex forms which resolves the HJ.

The protein resides in the cytoplasm. The enzyme catalyses ATP + H2O = ADP + phosphate + H(+). Its function is as follows. The RuvA-RuvB-RuvC complex processes Holliday junction (HJ) DNA during genetic recombination and DNA repair, while the RuvA-RuvB complex plays an important role in the rescue of blocked DNA replication forks via replication fork reversal (RFR). RuvA specifically binds to HJ cruciform DNA, conferring on it an open structure. The RuvB hexamer acts as an ATP-dependent pump, pulling dsDNA into and through the RuvAB complex. RuvB forms 2 homohexamers on either side of HJ DNA bound by 1 or 2 RuvA tetramers; 4 subunits per hexamer contact DNA at a time. Coordinated motions by a converter formed by DNA-disengaged RuvB subunits stimulates ATP hydrolysis and nucleotide exchange. Immobilization of the converter enables RuvB to convert the ATP-contained energy into a lever motion, pulling 2 nucleotides of DNA out of the RuvA tetramer per ATP hydrolyzed, thus driving DNA branch migration. The RuvB motors rotate together with the DNA substrate, which together with the progressing nucleotide cycle form the mechanistic basis for DNA recombination by continuous HJ branch migration. Branch migration allows RuvC to scan DNA until it finds its consensus sequence, where it cleaves and resolves cruciform DNA. This chain is Holliday junction branch migration complex subunit RuvB, found in Escherichia coli O17:K52:H18 (strain UMN026 / ExPEC).